The chain runs to 236 residues: DNA repair protein RecO (236 aa).

The protein belongs to the RecO family.

Functionally, involved in DNA repair and RecF pathway recombination. The polypeptide is DNA repair protein RecO (Cellvibrio japonicus (strain Ueda107) (Pseudomonas fluorescens subsp. cellulosa)).